We begin with the raw amino-acid sequence, 569 residues long: Putative diguanylate cyclase DgcQ (569 aa).

2 helical membrane-spanning segments follow: residues 25–45 (LGPG…STLL) and 365–385 (IALT…WYVI). One can recognise a GGDEF domain in the interval 433 to 568 (HPFSVIQVDL…GRNRVFASDN (136 aa)). Aspartate 441 lines the Mg(2+) pocket. The substrate site is built by asparagine 449, histidine 454, and aspartate 458. Glutamate 484 lines the Mg(2+) pocket. Glutamate 484 (proton acceptor) is an active-site residue.

Homodimer. Requires Mg(2+) as cofactor.

The protein localises to the cell inner membrane. The catalysed reaction is 2 GTP = 3',3'-c-di-GMP + 2 diphosphate. It participates in glycan metabolism; bacterial cellulose biosynthesis. Its pathway is purine metabolism; 3',5'-cyclic di-GMP biosynthesis. Functionally, catalyzes the synthesis of cyclic-di-GMP (c-di-GMP) via the condensation of 2 GTP molecules. Cyclic-di-GMP is a second messenger which controls cell surface-associated traits in bacteria. Involved in the regulation of cellulose production. In Shigella flexneri, this protein is Putative diguanylate cyclase DgcQ.